The following is a 321-amino-acid chain: MPELAVQKVVVHPLVLLSVVDHFNRIGKVGNQKRVVGVLLGSWQKKVLDVSNSFAVPFDEDDKDDSVWFLDHDYLENMYGMFKKVNARERIVGWYHTGPKLHKNDIAINELMKRYCPNSVLVIIDVKPKDLGLPTEAYISVEEVHDDGTPTSKTFEHVTSEIGAEEAEEVGVEHLLRDIKDTTVGTLSQRITNQVHGLKGLNSKLLDIRSYLEKVASGKLPINHQIIYQLQDVFNLLPDASLQEFVKAFYLKTNDQMVVVYLASLIRSVVALHNLINNKIANRDAEKKEGQEKEESKKERKDDKEKEKSDAAKKEEKKEKK.

One can recognise an MPN domain in the interval 9 to 144; that stretch reads VVVHPLVLLS…TEAYISVEEV (136 aa). K180 is covalently cross-linked (Glycyl lysine isopeptide (Lys-Gly) (interchain with G-Cter in ubiquitin)). An N6-acetyllysine mark is found at K204, K214, K313, and K314. Positions 281–321 are disordered; that stretch reads ANRDAEKKEGQEKEESKKERKDDKEKEKSDAAKKEEKKEKK.

Belongs to the peptidase M67A family. In terms of assembly, component of the 19S proteasome regulatory particle complex. The 26S proteasome consists of a 20S core particle (CP) and two 19S regulatory subunits (RP). The regulatory particle is made of a lid composed of 9 subunits including PSMD7, a base containing 6 ATPases and few additional components. Within the complex, PSMD7 interacts with subunit PSMD4 through their respective MPN domain. Interacts with TRIM5.

Functionally, component of the 26S proteasome, a multiprotein complex involved in the ATP-dependent degradation of ubiquitinated proteins. This complex plays a key role in the maintenance of protein homeostasis by removing misfolded or damaged proteins, which could impair cellular functions, and by removing proteins whose functions are no longer required. Therefore, the proteasome participates in numerous cellular processes, including cell cycle progression, apoptosis, or DNA damage repair. This chain is 26S proteasome non-ATPase regulatory subunit 7 (Psmd7), found in Mus musculus (Mouse).